Reading from the N-terminus, the 208-residue chain is Methylthioribulose-1-phosphate dehydratase (208 aa).

2 residues coordinate Zn(2+): His-98 and His-100.

Belongs to the aldolase class II family. MtnB subfamily. Zn(2+) serves as cofactor.

It carries out the reaction 5-(methylsulfanyl)-D-ribulose 1-phosphate = 5-methylsulfanyl-2,3-dioxopentyl phosphate + H2O. It participates in amino-acid biosynthesis; L-methionine biosynthesis via salvage pathway; L-methionine from S-methyl-5-thio-alpha-D-ribose 1-phosphate: step 2/6. Its function is as follows. Catalyzes the dehydration of methylthioribulose-1-phosphate (MTRu-1-P) into 2,3-diketo-5-methylthiopentyl-1-phosphate (DK-MTP-1-P). This is Methylthioribulose-1-phosphate dehydratase from Hahella chejuensis (strain KCTC 2396).